A 152-amino-acid polypeptide reads, in one-letter code: Small ribosomal subunit protein uS15 (152 aa).

It belongs to the universal ribosomal protein uS15 family. In terms of assembly, part of the 30S ribosomal subunit.

This chain is Small ribosomal subunit protein uS15, found in Methanocorpusculum labreanum (strain ATCC 43576 / DSM 4855 / Z).